We begin with the raw amino-acid sequence, 828 residues long: Cadherin-22 (828 aa).

The N-terminal stretch at 1–34 (MRPRPEGRGLRAGVALSPALLLLLLLPPPPTLLG) is a signal peptide. Topologically, residues 36–624 (LWAAGTPSPS…AFVMAASLSP (589 aa)) are extracellular. Cadherin domains follow at residues 64 to 168 (WVWN…EPRF), 169 to 277 (LHGP…PPRF), 278 to 394 (PQKM…PPEF), 395 to 498 (RPPS…NPPE), and 499 to 616 (LATP…TTAF). An N-linked (GlcNAc...) asparagine glycan is attached at Asn162. Residues Asn466 and Asn612 are each glycosylated (N-linked (GlcNAc...) asparagine). The chain crosses the membrane as a helical span at residues 625 to 645 (GALIALLVCVLILVVLVLLIL). Residues 646–828 (TLRRHHKSHL…HRGDDEAQAS (183 aa)) lie on the Cytoplasmic side of the membrane. Residues 702 to 719 (GGGSAGGGAGGGSGGGAG) show a composition bias toward gly residues. Positions 702–745 (GGGSAGGGAGGGSGGGAGSPPQAHLPSERHSLPQGPPSPEPDFS) are disordered.

The protein resides in the cell membrane. In terms of biological role, cadherins are calcium-dependent cell adhesion proteins. They preferentially interact with themselves in a homophilic manner in connecting cells; cadherins may thus contribute to the sorting of heterogeneous cell types. PB-cadherins may have a role in the morphological organization of pituitary gland and brain tissues. This is Cadherin-22 (CDH22) from Homo sapiens (Human).